Consider the following 347-residue polypeptide: MNIINNSENVCTGVKIWLCICCIGILVMVFIGGITRLTHSGLSITEWNPVIGIFPPVTEKMWIAEKIKYMATPEYKYITSNITLTEFKKLYLIEYFHRLLGRIVGLVFLIPFLYFMYKQKLSKNLIHRFILIAFLILVQGVMGWYMVKSGLIDRPHVSHYRLAMHLLLALAIFYLLWKHFLLSVVHQIKCNIKVTNTSVFYIIISLITIQITCGALVAGLNAGLLSKDIPFLSDKVGLNDLLFIKPWWHNIYNNPITVQFIHEVIALLILIIVVITLLVLKVRIFPMYLLLALLLIQLTLGILTFIYNVPIILASLHQVTAFILFASSIYLLHYVKLLQIQYVKNKI.

A run of 8 helical transmembrane segments spans residues 14–34 (VKIW…IGGI), 96–116 (FHRL…LYFM), 129–149 (FILI…MVKS), 162–182 (LAMH…HFLL), 199–219 (VFYI…LVAG), 260–280 (FIHE…LLVL), 287–307 (MYLL…TFIY), and 311–331 (IILA…SIYL). Position 262 (histidine 262) interacts with heme. Histidine 317 is a heme binding site.

The protein belongs to the COX15/CtaA family. Type 2 subfamily. In terms of assembly, interacts with CtaB. The cofactor is heme b.

The protein localises to the cell membrane. The catalysed reaction is Fe(II)-heme o + 2 A + H2O = Fe(II)-heme a + 2 AH2. It functions in the pathway porphyrin-containing compound metabolism; heme A biosynthesis; heme A from heme O: step 1/1. Functionally, catalyzes the conversion of heme O to heme A by two successive hydroxylations of the methyl group at C8. The first hydroxylation forms heme I, the second hydroxylation results in an unstable dihydroxymethyl group, which spontaneously dehydrates, resulting in the formyl group of heme A. This is Heme A synthase from Ehrlichia ruminantium (strain Welgevonden).